The chain runs to 619 residues: 1-deoxy-D-xylulose-5-phosphate synthase (619 aa).

Thiamine diphosphate is bound by residues His80 and 121-123 (GHS). Asp152 is a Mg(2+) binding site. Thiamine diphosphate is bound by residues 153 to 154 (GA), Asn181, Tyr288, and Glu370. Asn181 contacts Mg(2+).

It belongs to the transketolase family. DXPS subfamily. In terms of assembly, homodimer. Requires Mg(2+) as cofactor. Thiamine diphosphate serves as cofactor.

The enzyme catalyses D-glyceraldehyde 3-phosphate + pyruvate + H(+) = 1-deoxy-D-xylulose 5-phosphate + CO2. The protein operates within metabolic intermediate biosynthesis; 1-deoxy-D-xylulose 5-phosphate biosynthesis; 1-deoxy-D-xylulose 5-phosphate from D-glyceraldehyde 3-phosphate and pyruvate: step 1/1. Its function is as follows. Catalyzes the acyloin condensation reaction between C atoms 2 and 3 of pyruvate and glyceraldehyde 3-phosphate to yield 1-deoxy-D-xylulose-5-phosphate (DXP). The chain is 1-deoxy-D-xylulose-5-phosphate synthase from Yersinia pseudotuberculosis serotype I (strain IP32953).